The primary structure comprises 74 residues: ATP synthase subunit c (74 aa).

A run of 2 helical transmembrane segments spans residues 9 to 29 and 51 to 71; these read IAIA…ASIF and LIGA…AILL.

The protein belongs to the ATPase C chain family. F-type ATPases have 2 components, F(1) - the catalytic core - and F(0) - the membrane proton channel. F(1) has five subunits: alpha(3), beta(3), gamma(1), delta(1), epsilon(1). F(0) has three main subunits: a(1), b(2) and c(10-14). The alpha and beta chains form an alternating ring which encloses part of the gamma chain. F(1) is attached to F(0) by a central stalk formed by the gamma and epsilon chains, while a peripheral stalk is formed by the delta and b chains.

It is found in the cell inner membrane. F(1)F(0) ATP synthase produces ATP from ADP in the presence of a proton or sodium gradient. F-type ATPases consist of two structural domains, F(1) containing the extramembraneous catalytic core and F(0) containing the membrane proton channel, linked together by a central stalk and a peripheral stalk. During catalysis, ATP synthesis in the catalytic domain of F(1) is coupled via a rotary mechanism of the central stalk subunits to proton translocation. Its function is as follows. Key component of the F(0) channel; it plays a direct role in translocation across the membrane. A homomeric c-ring of between 10-14 subunits forms the central stalk rotor element with the F(1) delta and epsilon subunits. The protein is ATP synthase subunit c of Orientia tsutsugamushi (strain Ikeda) (Rickettsia tsutsugamushi).